A 440-amino-acid chain; its full sequence is Xaa-Pro dipeptidase (440 aa).

Mn(2+)-binding residues include Asp-244, Asp-255, His-335, Glu-380, and Glu-419.

This sequence belongs to the peptidase M24B family. Bacterial-type prolidase subfamily. Mn(2+) serves as cofactor.

It catalyses the reaction Xaa-L-Pro dipeptide + H2O = an L-alpha-amino acid + L-proline. In terms of biological role, splits dipeptides with a prolyl residue in the C-terminal position. The chain is Xaa-Pro dipeptidase from Shewanella baltica (strain OS185).